Here is a 391-residue protein sequence, read N- to C-terminus: UPF0229 protein CA_C0580 (391 aa).

Disordered stretches follow at residues 1 to 20 and 75 to 109; these read MAIFRDYSINPTEHDRTIGD and VGSGTGNEKKGDIIGKEQMGNGSKGKGKGAGNSEG. Gly residues predominate over residues 96–106; it reads GSKGKGKGAGN.

The protein belongs to the UPF0229 family.

The sequence is that of UPF0229 protein CA_C0580 from Clostridium acetobutylicum (strain ATCC 824 / DSM 792 / JCM 1419 / IAM 19013 / LMG 5710 / NBRC 13948 / NRRL B-527 / VKM B-1787 / 2291 / W).